A 154-amino-acid chain; its full sequence is MFHVSFRYIFGIPPLILVLLPVTSSDCHIKDKDGKAFGSVLMISINQLDKMTGTDSDCPNNEPNFFKKHLCDDTKEAAFLNRAARKLRQFLKMNISEEFNDHLLRVSDGTQTLVNCTSKEEKTIKEQKKNDPCFLKRLLREIKTCWNKILKGSI.

The signal sequence occupies residues 1–25 (MFHVSFRYIFGIPPLILVLLPVTSS). Intrachain disulfides connect cysteine 27–cysteine 145, cysteine 58–cysteine 133, and cysteine 71–cysteine 116. Asparagine 94 and asparagine 115 each carry an N-linked (GlcNAc...) asparagine glycan.

Belongs to the IL-7/IL-9 family. As to quaternary structure, interacts with IL7R and CSF2RG. In terms of processing, three disulfide bonds are present.

The protein localises to the secreted. In terms of biological role, hematopoietic cytokine that plays an essential role in the development, expansion, and survival of naive and memory T-cells and B-cells thereby regulating the number of mature lymphocytes and maintaining lymphoid homeostasis. Mechanistically, exerts its biological effects through a receptor composed of IL7RA subunit and the cytokine receptor common subunit gamma/CSF2RG. Binding to the receptor leads to activation of various kinases including JAK1 or JAK3 depending on the cell type and subsequently propagation of signals through activation of several downstream signaling pathways including the PI3K/Akt/mTOR or the JAK-STAT5. This chain is Interleukin-7 (Il7), found in Rattus norvegicus (Rat).